Reading from the N-terminus, the 1024-residue chain is DNA-directed RNA polymerase subunit beta (1024 aa).

The protein belongs to the RNA polymerase beta chain family. In terms of assembly, in plastids the minimal PEP RNA polymerase catalytic core is composed of four subunits: alpha, beta, beta', and beta''. When a (nuclear-encoded) sigma factor is associated with the core the holoenzyme is formed, which can initiate transcription (Potential).

The protein localises to the plastid. Its subcellular location is the apicoplast. The catalysed reaction is RNA(n) + a ribonucleoside 5'-triphosphate = RNA(n+1) + diphosphate. Its function is as follows. DNA-dependent RNA polymerase catalyzes the transcription of DNA into RNA using the four ribonucleoside triphosphates as substrates. The sequence is that of DNA-directed RNA polymerase subunit beta (rpoB) from Plasmodium falciparum (isolate 3D7).